Consider the following 450-residue polypeptide: Phosphoglucosamine mutase (450 aa).

The active-site Phosphoserine intermediate is the Ser104. 4 residues coordinate Mg(2+): Ser104, Asp245, Asp247, and Asp249. Residue Ser104 is modified to Phosphoserine.

The protein belongs to the phosphohexose mutase family. It depends on Mg(2+) as a cofactor. In terms of processing, activated by phosphorylation.

The enzyme catalyses alpha-D-glucosamine 1-phosphate = D-glucosamine 6-phosphate. Its function is as follows. Catalyzes the conversion of glucosamine-6-phosphate to glucosamine-1-phosphate. This Phenylobacterium zucineum (strain HLK1) protein is Phosphoglucosamine mutase.